We begin with the raw amino-acid sequence, 169 residues long: Ribosome maturation factor RimM (169 aa).

Residues 97–169 (EDEVYFKDLI…KIVVDWEYDY (73 aa)) form the PRC barrel domain.

Belongs to the RimM family. Binds ribosomal protein uS19.

It is found in the cytoplasm. Its function is as follows. An accessory protein needed during the final step in the assembly of 30S ribosomal subunit, possibly for assembly of the head region. Essential for efficient processing of 16S rRNA. May be needed both before and after RbfA during the maturation of 16S rRNA. It has affinity for free ribosomal 30S subunits but not for 70S ribosomes. The protein is Ribosome maturation factor RimM of Francisella tularensis subsp. holarctica (strain FTNF002-00 / FTA).